The following is a 332-amino-acid chain: Glycerol-3-phosphate dehydrogenase [NAD(P)+] (332 aa).

NADPH is bound by residues tryptophan 11, arginine 30, and lysine 108. Positions 108, 137, and 139 each coordinate sn-glycerol 3-phosphate. Alanine 141 is an NADPH binding site. Sn-glycerol 3-phosphate is bound by residues lysine 192, aspartate 245, serine 255, arginine 256, and asparagine 257. Residue lysine 192 is the Proton acceptor of the active site. Arginine 256 is a binding site for NADPH. NADPH-binding residues include valine 280 and glutamate 282.

This sequence belongs to the NAD-dependent glycerol-3-phosphate dehydrogenase family.

Its subcellular location is the cytoplasm. The catalysed reaction is sn-glycerol 3-phosphate + NAD(+) = dihydroxyacetone phosphate + NADH + H(+). The enzyme catalyses sn-glycerol 3-phosphate + NADP(+) = dihydroxyacetone phosphate + NADPH + H(+). It functions in the pathway membrane lipid metabolism; glycerophospholipid metabolism. Its function is as follows. Catalyzes the reduction of the glycolytic intermediate dihydroxyacetone phosphate (DHAP) to sn-glycerol 3-phosphate (G3P), the key precursor for phospholipid synthesis. The chain is Glycerol-3-phosphate dehydrogenase [NAD(P)+] from Burkholderia ambifaria (strain MC40-6).